The following is a 317-amino-acid chain: MIVVTGAAGFIGSNLVKQLNAMGRNDIIAVDDLTDGTQMFNLADCEIADYLDKDDFIKQIKAGDFDNKLEVIFHQGACSSTTEWDGKFMMANNFEYSKTLLHYSQANNCQFIYASSASVYGGSEKFIEQRELEKPLNVYAYSKFLFDQYVRQQKLTGQVAGLRYFNVYGPREQHKGGMASVAFHFNNQINTNGVCRLFEGVDGYENGQQLRDFVFVEDVVKVNLWLWQNPSVSGIYNCGTGQAQSFNDVANAVIAYHGKGHIEYIPFPDKLKGAYQSYTQADLTQLRAAGYQGEFKTVEQAVPEYLDWLKTQHFIGQ.

Residues Phe-10–Ile-11, Asp-31–Asp-32, Gln-38, Lys-53, Gln-75–Ser-79, and Asn-92 contribute to the NADP(+) site. Residue Tyr-139 is the Proton acceptor of the active site. An NADP(+)-binding site is contributed by Lys-143. Residue Asn-166 participates in substrate binding. NADP(+) is bound by residues Val-167 and Lys-175. The Proton acceptor role is filled by Lys-175. Residues Gly-177, His-184, Phe-198–Val-201, Arg-211, and Tyr-275 each bind substrate.

It belongs to the NAD(P)-dependent epimerase/dehydratase family. HldD subfamily. In terms of assembly, homopentamer. NADP(+) serves as cofactor.

It carries out the reaction ADP-D-glycero-beta-D-manno-heptose = ADP-L-glycero-beta-D-manno-heptose. The protein operates within nucleotide-sugar biosynthesis; ADP-L-glycero-beta-D-manno-heptose biosynthesis; ADP-L-glycero-beta-D-manno-heptose from D-glycero-beta-D-manno-heptose 7-phosphate: step 4/4. Catalyzes the interconversion between ADP-D-glycero-beta-D-manno-heptose and ADP-L-glycero-beta-D-manno-heptose via an epimerization at carbon 6 of the heptose. The protein is ADP-L-glycero-D-manno-heptose-6-epimerase of Shewanella frigidimarina (strain NCIMB 400).